A 247-amino-acid chain; its full sequence is RNA-free ribonuclease P (247 aa).

The protein belongs to the HARP family.

The enzyme catalyses Endonucleolytic cleavage of RNA, removing 5'-extranucleotides from tRNA precursor.. Its function is as follows. RNA-free RNase P that catalyzes the removal of the 5'-leader sequence from pre-tRNA to produce the mature 5'-terminus. The chain is RNA-free ribonuclease P from Methanosarcina mazei (strain ATCC BAA-159 / DSM 3647 / Goe1 / Go1 / JCM 11833 / OCM 88) (Methanosarcina frisia).